The chain runs to 520 residues: Glucose-6-phosphate isomerase (520 aa).

The Proton donor role is filled by E327. Catalysis depends on residues H358 and K486.

The protein belongs to the GPI family.

It localises to the cytoplasm. The catalysed reaction is alpha-D-glucose 6-phosphate = beta-D-fructose 6-phosphate. Its pathway is carbohydrate biosynthesis; gluconeogenesis. The protein operates within carbohydrate degradation; glycolysis; D-glyceraldehyde 3-phosphate and glycerone phosphate from D-glucose: step 2/4. In terms of biological role, catalyzes the reversible isomerization of glucose-6-phosphate to fructose-6-phosphate. The sequence is that of Glucose-6-phosphate isomerase from Bordetella avium (strain 197N).